Reading from the N-terminus, the 151-residue chain is Small ribosomal subunit protein uS11 (151 aa).

A disordered region spans residues 130–151 (EDVTPIPSDSTRRKGGRRGRRL). Residues 142–151 (RKGGRRGRRL) are compositionally biased toward basic residues.

The protein belongs to the universal ribosomal protein uS11 family.

This chain is Small ribosomal subunit protein uS11, found in Aedes aegypti (Yellowfever mosquito).